Consider the following 253-residue polypeptide: MRQIIIAGNWKMNTTLSEACTLVQSMKCELERIEGIEKIICPPFISLYPIKTMLENSSIKLGAQNLFYQEKGAYTGEISPLMLKELCQYVIIGHSERRAYFGETGQVVNQKIKAALQAGLLPIVCVGEKPEENENGQTRQVLETQLKEALDGLNLSCIIIAYEPIWAIGTGKAATASEANSAIGYIRRVLGDTLGNAAAQTSPILYGGSVNEKNITEILSQTNIDGALVGGASLKAESFVSICRQAAVIQNKH.

9–11 (NWK) contacts substrate. The active-site Electrophile is histidine 94. Catalysis depends on glutamate 163, which acts as the Proton acceptor. Residues glycine 169, serine 209, and 230–231 (GG) each bind substrate.

Belongs to the triosephosphate isomerase family. In terms of assembly, homodimer.

It localises to the cytoplasm. The catalysed reaction is D-glyceraldehyde 3-phosphate = dihydroxyacetone phosphate. Its pathway is carbohydrate biosynthesis; gluconeogenesis. It participates in carbohydrate degradation; glycolysis; D-glyceraldehyde 3-phosphate from glycerone phosphate: step 1/1. Involved in the gluconeogenesis. Catalyzes stereospecifically the conversion of dihydroxyacetone phosphate (DHAP) to D-glyceraldehyde-3-phosphate (G3P). The protein is Triosephosphate isomerase of Dehalococcoides mccartyi (strain ATCC BAA-2100 / JCM 16839 / KCTC 5957 / BAV1).